Here is a 198-residue protein sequence, read N- to C-terminus: uncharacterized protein (198 aa).

This is an uncharacterized protein from Caenorhabditis elegans.